The primary structure comprises 418 residues: UDP-N-acetylglucosamine 1-carboxyvinyltransferase (418 aa).

Residue 22 to 23 (KN) coordinates phosphoenolpyruvate. Arginine 91 is a binding site for UDP-N-acetyl-alpha-D-glucosamine. Cysteine 115 serves as the catalytic Proton donor. A 2-(S-cysteinyl)pyruvic acid O-phosphothioketal modification is found at cysteine 115. Residues 120–124 (RPVDL), 160–163 (KVSV), aspartate 305, and isoleucine 327 each bind UDP-N-acetyl-alpha-D-glucosamine.

This sequence belongs to the EPSP synthase family. MurA subfamily.

The protein localises to the cytoplasm. The enzyme catalyses phosphoenolpyruvate + UDP-N-acetyl-alpha-D-glucosamine = UDP-N-acetyl-3-O-(1-carboxyvinyl)-alpha-D-glucosamine + phosphate. It participates in cell wall biogenesis; peptidoglycan biosynthesis. Cell wall formation. Adds enolpyruvyl to UDP-N-acetylglucosamine. In Baumannia cicadellinicola subsp. Homalodisca coagulata, this protein is UDP-N-acetylglucosamine 1-carboxyvinyltransferase.